A 635-amino-acid polypeptide reads, in one-letter code: Threonine--tRNA ligase (635 aa).

The 61-residue stretch at Met1–Thr61 folds into the TGS domain. The interval Asp242–Pro533 is catalytic. Residues Cys333, His384, and His510 each coordinate Zn(2+).

This sequence belongs to the class-II aminoacyl-tRNA synthetase family. Homodimer. Requires Zn(2+) as cofactor.

It localises to the cytoplasm. The enzyme catalyses tRNA(Thr) + L-threonine + ATP = L-threonyl-tRNA(Thr) + AMP + diphosphate + H(+). Catalyzes the attachment of threonine to tRNA(Thr) in a two-step reaction: L-threonine is first activated by ATP to form Thr-AMP and then transferred to the acceptor end of tRNA(Thr). Also edits incorrectly charged L-seryl-tRNA(Thr). In Nitrosomonas europaea (strain ATCC 19718 / CIP 103999 / KCTC 2705 / NBRC 14298), this protein is Threonine--tRNA ligase.